Reading from the N-terminus, the 486-residue chain is Malonate-semialdehyde dehydrogenase (486 aa).

F154, K178, E181, R182, and S231 together coordinate NAD(+). The active-site Nucleophile is the C286. E386 serves as a coordination point for NAD(+).

This sequence belongs to the aldehyde dehydrogenase family. IolA subfamily. As to quaternary structure, homotetramer.

The enzyme catalyses 3-oxopropanoate + NAD(+) + CoA + H2O = hydrogencarbonate + acetyl-CoA + NADH + H(+). It carries out the reaction 2-methyl-3-oxopropanoate + NAD(+) + CoA + H2O = propanoyl-CoA + hydrogencarbonate + NADH + H(+). It participates in polyol metabolism; myo-inositol degradation into acetyl-CoA; acetyl-CoA from myo-inositol: step 7/7. In terms of biological role, catalyzes the oxidation of malonate semialdehyde (MSA) and methylmalonate semialdehyde (MMSA) into acetyl-CoA and propanoyl-CoA, respectively. Is involved in a myo-inositol catabolic pathway. Bicarbonate, and not CO2, is the end-product of the enzymatic reaction. The polypeptide is Malonate-semialdehyde dehydrogenase (Bacillus cereus (strain ATCC 10987 / NRS 248)).